The primary structure comprises 338 residues: UDP-glucose 4-epimerase (338 aa).

NAD(+) contacts are provided by residues 11–12 (YI), 31–36 (DNLCNS), 58–59 (DI), 80–84 (FAGLK), N99, S124, Y149, K153, and F178. The substrate site is built by S124 and Y149. Y149 functions as the Proton acceptor in the catalytic mechanism. Residues N179, 199–200 (NL), 216–218 (SVF), R231, and 292–295 (RSGD) each bind substrate.

The protein belongs to the NAD(P)-dependent epimerase/dehydratase family. In terms of assembly, homodimer. The cofactor is NAD(+).

It carries out the reaction UDP-alpha-D-glucose = UDP-alpha-D-galactose. It participates in carbohydrate metabolism; galactose metabolism. Functionally, involved in the metabolism of galactose. Catalyzes the conversion of UDP-galactose (UDP-Gal) to UDP-glucose (UDP-Glc) through a mechanism involving the transient reduction of NAD. By controlling the internal galactose concentration, it may be linked to the biosynthesis of lipopolysaccharide surface molecules, which are important for the pathogenesis of H.influenzae. The sequence is that of UDP-glucose 4-epimerase (galE) from Haemophilus influenzae (strain ATCC 51907 / DSM 11121 / KW20 / Rd).